We begin with the raw amino-acid sequence, 331 residues long: Ribosomal RNA small subunit methyltransferase H (331 aa).

Residues 38–40 (GGY), Asp-56, Phe-83, Asp-100, and Gln-107 contribute to the S-adenosyl-L-methionine site. The tract at residues 289-331 (AELAENPRARSARLRVGVRTDAPAGKVDPQALGTPLIPKKGRR) is disordered.

Belongs to the methyltransferase superfamily. RsmH family.

The protein resides in the cytoplasm. It carries out the reaction cytidine(1402) in 16S rRNA + S-adenosyl-L-methionine = N(4)-methylcytidine(1402) in 16S rRNA + S-adenosyl-L-homocysteine + H(+). Functionally, specifically methylates the N4 position of cytidine in position 1402 (C1402) of 16S rRNA. The chain is Ribosomal RNA small subunit methyltransferase H from Cereibacter sphaeroides (strain ATCC 17029 / ATH 2.4.9) (Rhodobacter sphaeroides).